Consider the following 294-residue polypeptide: uncharacterized protein (294 aa).

The segment at 1–32 (MSHLKDPTTQYYTGEYPKQKQPTPGIQAKMTP) is disordered. Lys-39 is subject to N6-acetyllysine. 53–77 (LVTGGDSGIGRAAAIAYAREGADVA) serves as a coordination point for NADP(+). Residue Ser-186 coordinates substrate. Tyr-199 serves as the catalytic Proton acceptor.

This sequence belongs to the short-chain dehydrogenases/reductases (SDR) family.

This is an uncharacterized protein from Escherichia coli (strain K12).